Reading from the N-terminus, the 178-residue chain is ATP synthase subunit delta (178 aa).

This sequence belongs to the ATPase delta chain family. F-type ATPases have 2 components, F(1) - the catalytic core - and F(0) - the membrane proton channel. F(1) has five subunits: alpha(3), beta(3), gamma(1), delta(1), epsilon(1). F(0) has three main subunits: a(1), b(2) and c(10-14). The alpha and beta chains form an alternating ring which encloses part of the gamma chain. F(1) is attached to F(0) by a central stalk formed by the gamma and epsilon chains, while a peripheral stalk is formed by the delta and b chains.

It localises to the cell inner membrane. Functionally, f(1)F(0) ATP synthase produces ATP from ADP in the presence of a proton or sodium gradient. F-type ATPases consist of two structural domains, F(1) containing the extramembraneous catalytic core and F(0) containing the membrane proton channel, linked together by a central stalk and a peripheral stalk. During catalysis, ATP synthesis in the catalytic domain of F(1) is coupled via a rotary mechanism of the central stalk subunits to proton translocation. In terms of biological role, this protein is part of the stalk that links CF(0) to CF(1). It either transmits conformational changes from CF(0) to CF(1) or is implicated in proton conduction. This Nitrosomonas europaea (strain ATCC 19718 / CIP 103999 / KCTC 2705 / NBRC 14298) protein is ATP synthase subunit delta.